A 374-amino-acid polypeptide reads, in one-letter code: Alanine racemase (374 aa).

The Proton acceptor; specific for D-alanine role is filled by K34. Residue K34 is modified to N6-(pyridoxal phosphate)lysine. R147 lines the substrate pocket. Y271 serves as the catalytic Proton acceptor; specific for L-alanine. Position 319 (M319) interacts with substrate.

This sequence belongs to the alanine racemase family. It depends on pyridoxal 5'-phosphate as a cofactor.

It catalyses the reaction L-alanine = D-alanine. The protein operates within amino-acid biosynthesis; D-alanine biosynthesis; D-alanine from L-alanine: step 1/1. Catalyzes the interconversion of L-alanine and D-alanine. May also act on other amino acids. The sequence is that of Alanine racemase (alr) from Actinobacillus pleuropneumoniae serotype 5b (strain L20).